The primary structure comprises 285 residues: Isoprenyl transferase 2 (285 aa).

The interval 11–30 is disordered; that stretch reads RREYRAPEPHPSGARAPKLP. Asp43 is an active-site residue. Asp43 is a binding site for Mg(2+). Residues 44–47, Trp48, Arg56, His60, and 88–90 each bind substrate; these read GNGR and STE. Residue Asn91 is the Proton acceptor of the active site. Residues Trp92, Arg94, Arg211, and 217–219 each bind substrate; that span reads RTS. Glu230 contributes to the Mg(2+) binding site.

This sequence belongs to the UPP synthase family. As to quaternary structure, homodimer. Mg(2+) is required as a cofactor.

In terms of biological role, catalyzes the condensation of isopentenyl diphosphate (IPP) with allylic pyrophosphates generating different type of terpenoids. The sequence is that of Isoprenyl transferase 2 from Streptomyces avermitilis (strain ATCC 31267 / DSM 46492 / JCM 5070 / NBRC 14893 / NCIMB 12804 / NRRL 8165 / MA-4680).